A 273-amino-acid chain; its full sequence is Hydroxyethylthiazole kinase (273 aa).

Methionine 47 contacts substrate. Residues arginine 123 and threonine 169 each coordinate ATP. Glycine 196 is a substrate binding site.

It belongs to the Thz kinase family. Requires Mg(2+) as cofactor.

It catalyses the reaction 5-(2-hydroxyethyl)-4-methylthiazole + ATP = 4-methyl-5-(2-phosphooxyethyl)-thiazole + ADP + H(+). Its pathway is cofactor biosynthesis; thiamine diphosphate biosynthesis; 4-methyl-5-(2-phosphoethyl)-thiazole from 5-(2-hydroxyethyl)-4-methylthiazole: step 1/1. Catalyzes the phosphorylation of the hydroxyl group of 4-methyl-5-beta-hydroxyethylthiazole (THZ). In Desulfotalea psychrophila (strain LSv54 / DSM 12343), this protein is Hydroxyethylthiazole kinase.